We begin with the raw amino-acid sequence, 189 residues long: Signal peptidase complex catalytic subunit sec11 (189 aa).

Over 1-8 (MQKLSFRQ) the chain is Cytoplasmic. The helical; Signal-anchor for type II membrane protein transmembrane segment at 9-25 (GLAQILNLLLVLSSAYM) threads the bilayer. Residues 26-189 (GYKTLSFVTD…LLTLIQKEEQ (164 aa)) lie on the Lumenal side of the membrane. Catalysis depends on charge relay system residues serine 47 and histidine 104. Asparagine 114 is a glycosylation site (N-linked (GlcNAc...) asparagine). Catalysis depends on aspartate 129, which acts as the Charge relay system. The C-terminal short (CTS) helix stretch occupies residues 173–184 (IMLGGLGLLTLI).

The protein belongs to the peptidase S26B family. In terms of assembly, component of the signal peptidase complex (SPC) composed of a catalytic subunit sec11 and three accessory subunits spc1, spc2 and spc3. The complex induces a local thinning of the ER membrane which is used to measure the length of the signal peptide (SP) h-region of protein substrates. This ensures the selectivity of the complex towards h-regions shorter than 18-20 amino acids. SPC associates with the translocon complex.

It is found in the endoplasmic reticulum membrane. The enzyme catalyses Cleavage of hydrophobic, N-terminal signal or leader sequences from secreted and periplasmic proteins.. Its function is as follows. Catalytic component of the signal peptidase complex (SPC) which catalyzes the cleavage of N-terminal signal sequences from nascent proteins as they are translocated into the lumen of the endoplasmic reticulum. Specifically cleaves N-terminal signal peptides that contain a hydrophobic alpha-helix (h-region) shorter than 18-20 amino acids. This Schizosaccharomyces pombe (strain 972 / ATCC 24843) (Fission yeast) protein is Signal peptidase complex catalytic subunit sec11 (sec11).